The chain runs to 431 residues: 3-phosphoshikimate 1-carboxyvinyltransferase (431 aa).

3-phosphoshikimate contacts are provided by Lys22, Ser23, and Arg27. Lys22 is a binding site for phosphoenolpyruvate. Residues Gly94 and Arg122 each contribute to the phosphoenolpyruvate site. 3-phosphoshikimate contacts are provided by Ser167, Gln169, Asp314, and Lys341. Gln169 provides a ligand contact to phosphoenolpyruvate. The active-site Proton acceptor is Asp314. Phosphoenolpyruvate is bound by residues Arg345 and Arg391.

Belongs to the EPSP synthase family. As to quaternary structure, monomer.

It localises to the cytoplasm. The enzyme catalyses 3-phosphoshikimate + phosphoenolpyruvate = 5-O-(1-carboxyvinyl)-3-phosphoshikimate + phosphate. It participates in metabolic intermediate biosynthesis; chorismate biosynthesis; chorismate from D-erythrose 4-phosphate and phosphoenolpyruvate: step 6/7. In terms of biological role, catalyzes the transfer of the enolpyruvyl moiety of phosphoenolpyruvate (PEP) to the 5-hydroxyl of shikimate-3-phosphate (S3P) to produce enolpyruvyl shikimate-3-phosphate and inorganic phosphate. In Leuconostoc citreum (strain KM20), this protein is 3-phosphoshikimate 1-carboxyvinyltransferase.